Here is a 328-residue protein sequence, read N- to C-terminus: Malate dehydrogenase (328 aa).

11-17 is a binding site for NAD(+); sequence GAAGQIG. Positions 92 and 98 each coordinate substrate. NAD(+)-binding positions include N105, Q112, and 129-131; that span reads VGN. Substrate is bound by residues N131 and R162. The active-site Proton acceptor is the H187.

The protein belongs to the LDH/MDH superfamily. MDH type 2 family.

The enzyme catalyses (S)-malate + NAD(+) = oxaloacetate + NADH + H(+). Functionally, catalyzes the reversible oxidation of malate to oxaloacetate. In Coxiella burnetii (strain CbuG_Q212) (Coxiella burnetii (strain Q212)), this protein is Malate dehydrogenase.